The chain runs to 369 residues: DNA replication and repair protein RecF (369 aa).

30–37 (GDNGSGKT) serves as a coordination point for ATP.

This sequence belongs to the RecF family.

Its subcellular location is the cytoplasm. The RecF protein is involved in DNA metabolism; it is required for DNA replication and normal SOS inducibility. RecF binds preferentially to single-stranded, linear DNA. It also seems to bind ATP. The sequence is that of DNA replication and repair protein RecF from Pseudomonas aeruginosa (strain LESB58).